Here is a 128-residue protein sequence, read N- to C-terminus: Azurin (128 aa).

One can recognise a Plastocyanin-like domain in the interval 1 to 128 (ACDVSIEGND…IMKGTIELGS (128 aa)). A disulfide bridge links C2 with C25. The Cu cation site is built by H45, C111, H116, and M120.

As to quaternary structure, monomer. Interacts with the AAUA/AAUB heterotetramer complex. It depends on Cu cation as a cofactor.

It is found in the periplasm. Its function is as follows. Transfers electrons from cytochrome c551 to cytochrome oxidase. Transfers electrons from the tryptophan tryptophylquinone of the aromatic amine dehydrogenase heterotetramer. In Alcaligenes faecalis, this protein is Azurin.